The sequence spans 363 residues: MAAARPTVSIYSKDGSVSSETIALPFVFKAPIRPDLVRSVHTAVAKNKRQPYAVSEKAGHQTSAESWGTGRALARIPRVGGGGTHRSGQAAFGNMCRSGRMFAPTKTWRKWHVKVNQNEKRYAISSAVAASGVPSLLLARGHRIEEIPEVPLVVDDAVQSFQKTKEAVALLKEIKAYRDVVKVANSRKLRAGKGKLRNRRHVQRRGPLVVFNEDAGIVKAFRNIPGVEIVNVRRLNLLQLAPGGHLGRFVIWTKSAFGLLDSVFGSTTEAAQLKKNYFLPENIISNADVTRLINSDEIQSIVKAAGPSRVKRAHVQKKNPLKNKAVLARLNPYAKAYKANVKLNTGKTPKAAGEKFLTVLHEN.

A Phosphoserine modification is found at S87. Residues 280–363 are C-terminal-extended nuclear localization signal; the sequence is PENIISNADV…EKFLTVLHEN (84 aa).

This sequence belongs to the universal ribosomal protein uL4 family. In terms of assembly, component of the large ribosomal subunit (LSU). Mature yeast ribosomes consist of a small (40S) and a large (60S) subunit. The 40S small subunit contains 1 molecule of ribosomal RNA (18S rRNA) and at least 33 different proteins. The large 60S subunit contains 3 rRNA molecules (25S, 5.8S and 5S rRNA) and at least 46 different proteins. uL4 is associated with the polypeptide exit tunnel. uL4 interacts with its chaperone ACL4 and the nuclear import receptor KAP104.

The protein localises to the cytoplasm. The protein resides in the nucleus. Functionally, component of the ribosome, a large ribonucleoprotein complex responsible for the synthesis of proteins in the cell. The small ribosomal subunit (SSU) binds messenger RNAs (mRNAs) and translates the encoded message by selecting cognate aminoacyl-transfer RNA (tRNA) molecules. The large subunit (LSU) contains the ribosomal catalytic site termed the peptidyl transferase center (PTC), which catalyzes the formation of peptide bonds, thereby polymerizing the amino acids delivered by tRNAs into a polypeptide chain. The nascent polypeptides leave the ribosome through a tunnel in the LSU and interact with protein factors that function in enzymatic processing, targeting, and the membrane insertion of nascent chains at the exit of the ribosomal tunnel. uL4 participates in the regulation of the accumulation of its own mRNA. The protein is Large ribosomal subunit protein uL4A (rpl402) of Schizosaccharomyces pombe (strain 972 / ATCC 24843) (Fission yeast).